We begin with the raw amino-acid sequence, 1069 residues long: Receptor-type guanylate cyclase gcy-29 (1069 aa).

Residues 1 to 23 (MLPNFWNFQFIFVIFCWIPIVVS) form the signal peptide. At 24–458 (DEKIVLKIGS…FREENCDYTQ (435 aa)) the chain is on the extracellular side. N161, N240, and N407 each carry an N-linked (GlcNAc...) asparagine glycan. The chain crosses the membrane as a helical span at residues 459-479 (TIVIATAVVCIILTVFLGIWL). The Cytoplasmic portion of the chain corresponds to 480–1069 (RRACETSALD…FKKKNNTFDF (590 aa)). The Protein kinase domain occupies 497 to 806 (RDDVQILDEE…RVRLATEIAL (310 aa)). Residues 503-511 (LDEEQVKSV) and K527 contribute to the ATP site. A Guanylate cyclase domain is found at 876-1006 (TVMFSDIVGF…ETVNIAAVME (131 aa)). Residues D881, I882, and D925 each contribute to the Mg(2+) site.

Belongs to the adenylyl cyclase class-4/guanylyl cyclase family. In terms of tissue distribution, expressed bilaterally in ASE and AFD sensory neurons.

Its subcellular location is the cell membrane. The enzyme catalyses GTP = 3',5'-cyclic GMP + diphosphate. In terms of biological role, guanylate cyclase involved in the production of the second messenger cGMP. This chain is Receptor-type guanylate cyclase gcy-29, found in Caenorhabditis elegans.